The sequence spans 141 residues: Nucleoside triphosphatase NudI (141 aa).

The Nudix hydrolase domain maps to 1–141 (MRQRTIVCPL…RHTLALKGLL (141 aa)). Positions 38–59 (GGVEPGERIEEALRREVREELG) match the Nudix box motif.

This sequence belongs to the Nudix hydrolase family. NudI subfamily. As to quaternary structure, monomer. Mg(2+) is required as a cofactor.

It carries out the reaction a ribonucleoside 5'-triphosphate + H2O = a ribonucleoside 5'-phosphate + diphosphate + H(+). The catalysed reaction is a 2'-deoxyribonucleoside 5'-triphosphate + H2O = a 2'-deoxyribonucleoside 5'-phosphate + diphosphate + H(+). The enzyme catalyses dUTP + H2O = dUMP + diphosphate + H(+). It catalyses the reaction dTTP + H2O = dTMP + diphosphate + H(+). It carries out the reaction dCTP + H2O = dCMP + diphosphate + H(+). Its function is as follows. Catalyzes the hydrolysis of nucleoside triphosphates, with a preference for pyrimidine deoxynucleoside triphosphates (dUTP, dTTP and dCTP). This chain is Nucleoside triphosphatase NudI, found in Salmonella schwarzengrund (strain CVM19633).